The following is a 376-amino-acid chain: 23S rRNA (uracil(747)-C(5))-methyltransferase RlmC (376 aa).

The [4Fe-4S] cluster site is built by Cys-3, Cys-11, Cys-14, and Cys-87. Residues Gln-212, Phe-241, Glu-262, and Asn-307 each contribute to the S-adenosyl-L-methionine site. Cys-334 functions as the Nucleophile in the catalytic mechanism.

It belongs to the class I-like SAM-binding methyltransferase superfamily. RNA M5U methyltransferase family. RlmC subfamily.

The catalysed reaction is uridine(747) in 23S rRNA + S-adenosyl-L-methionine = 5-methyluridine(747) in 23S rRNA + S-adenosyl-L-homocysteine + H(+). In terms of biological role, catalyzes the formation of 5-methyl-uridine at position 747 (m5U747) in 23S rRNA. In Salmonella newport (strain SL254), this protein is 23S rRNA (uracil(747)-C(5))-methyltransferase RlmC.